The following is a 414-amino-acid chain: Serine hydroxymethyltransferase (414 aa).

Residues leucine 121 and 125 to 127 (GHL) each bind (6S)-5,6,7,8-tetrahydrofolate. N6-(pyridoxal phosphate)lysine is present on lysine 229.

This sequence belongs to the SHMT family. As to quaternary structure, homodimer. The cofactor is pyridoxal 5'-phosphate.

The protein resides in the cytoplasm. It catalyses the reaction (6R)-5,10-methylene-5,6,7,8-tetrahydrofolate + glycine + H2O = (6S)-5,6,7,8-tetrahydrofolate + L-serine. It functions in the pathway one-carbon metabolism; tetrahydrofolate interconversion. Its pathway is amino-acid biosynthesis; glycine biosynthesis; glycine from L-serine: step 1/1. Its function is as follows. Catalyzes the reversible interconversion of serine and glycine with tetrahydrofolate (THF) serving as the one-carbon carrier. This reaction serves as the major source of one-carbon groups required for the biosynthesis of purines, thymidylate, methionine, and other important biomolecules. Also exhibits THF-independent aldolase activity toward beta-hydroxyamino acids, producing glycine and aldehydes, via a retro-aldol mechanism. The sequence is that of Serine hydroxymethyltransferase from Albidiferax ferrireducens (strain ATCC BAA-621 / DSM 15236 / T118) (Rhodoferax ferrireducens).